Here is a 269-residue protein sequence, read N- to C-terminus: Enoyl-[acyl-carrier-protein] reductase [NADH] (269 aa).

NAD(+) contacts are provided by residues Ser20 to Ile21, Asp64 to Val65, and Ile95 to Gly96. Tyr158 contacts substrate. Lys165 and Ile194 together coordinate NAD(+).

Belongs to the short-chain dehydrogenases/reductases (SDR) family. FabI subfamily. Homodimer. Homotetramer.

It catalyses the reaction a 2,3-saturated acyl-[ACP] + NAD(+) = a (2E)-enoyl-[ACP] + NADH + H(+). The catalysed reaction is a 2,3-saturated acyl-CoA + NAD(+) = a (2E)-enoyl-CoA + NADH + H(+). The protein operates within lipid metabolism; mycolic acid biosynthesis. Functionally, enoyl-ACP reductase of the type II fatty acid syntase (FAS-II) system, which is involved in the biosynthesis of mycolic acids, a major component of mycobacterial cell walls. Catalyzes the NADH-dependent reduction of the double bond of 2-trans-enoyl-[acyl-carrier protein], an essential step in the fatty acid elongation cycle of the FAS-II pathway. Shows preference for long-chain fatty acyl thioester substrates, and can also use 2-trans-enoyl-CoAs as alternative substrates. The mycobacterial FAS-II system utilizes the products of the FAS-I system as primers to extend fatty acyl chain lengths up to C56, forming the meromycolate chain that serves as the precursor for final mycolic acids. In terms of biological role, is the primary target of the first-line antitubercular drug isoniazid (INH) and of the second-line drug ethionamide (ETH). Overexpressed inhA confers INH and ETH resistance to M.bovis. The mechanism of isoniazid action against InhA is covalent attachment of the activated form of the drug to the nicotinamide ring of NAD and binding of the INH-NAD adduct to the active site of InhA. Similarly, the ETH-NAD adduct binds InhA. The polypeptide is Enoyl-[acyl-carrier-protein] reductase [NADH] (Mycobacterium bovis (strain ATCC BAA-935 / AF2122/97)).